A 209-amino-acid chain; its full sequence is Large ribosomal subunit protein uL3 (209 aa).

The residue at position 150 (Q150) is an N5-methylglutamine.

It belongs to the universal ribosomal protein uL3 family. Part of the 50S ribosomal subunit. Forms a cluster with proteins L14 and L19. Post-translationally, methylated by PrmB.

In terms of biological role, one of the primary rRNA binding proteins, it binds directly near the 3'-end of the 23S rRNA, where it nucleates assembly of the 50S subunit. In Salmonella arizonae (strain ATCC BAA-731 / CDC346-86 / RSK2980), this protein is Large ribosomal subunit protein uL3.